The following is a 184-amino-acid chain: Transposon Tn917 resolvase (184 aa).

The region spanning 1–134 (MIFGYARVST…SGLKAARVRG (134 aa)) is the Resolvase/invertase-type recombinase catalytic domain. Ser-9 serves as the catalytic O-(5'-phospho-DNA)-serine intermediate. The segment at residues 161–180 (IRQILDASKLSKTTFYRYLN) is a DNA-binding region (H-T-H motif).

This sequence belongs to the site-specific recombinase resolvase family.

Resolvase catalyzes the resolution (a site-specific recombination) of the cointegrated replicon to yield the final transposition products. The chain is Transposon Tn917 resolvase (tnpR) from Enterococcus faecalis (Streptococcus faecalis).